The sequence spans 197 residues: Protein GrpE (197 aa).

The span at 1–12 shows a compositional bias: basic and acidic residues; sequence MTDSDGKTDKSG. Residues 1-35 are disordered; sequence MTDSDGKTDKSGEPAAEVEPVVSKPYVMPDDPEDD.

The protein belongs to the GrpE family. Homodimer.

The protein resides in the cytoplasm. In terms of biological role, participates actively in the response to hyperosmotic and heat shock by preventing the aggregation of stress-denatured proteins, in association with DnaK and GrpE. It is the nucleotide exchange factor for DnaK and may function as a thermosensor. Unfolded proteins bind initially to DnaJ; upon interaction with the DnaJ-bound protein, DnaK hydrolyzes its bound ATP, resulting in the formation of a stable complex. GrpE releases ADP from DnaK; ATP binding to DnaK triggers the release of the substrate protein, thus completing the reaction cycle. Several rounds of ATP-dependent interactions between DnaJ, DnaK and GrpE are required for fully efficient folding. This is Protein GrpE from Nitrobacter winogradskyi (strain ATCC 25391 / DSM 10237 / CIP 104748 / NCIMB 11846 / Nb-255).